An 880-amino-acid chain; its full sequence is Probable dipeptidyl-aminopeptidase B (880 aa).

Over residues 1–26 the composition is skewed to basic and acidic residues; sequence MPRQRAPKEEEAELLTKQERSARSSE. The tract at residues 1 to 71 is disordered; it reads MPRQRAPKEE…KYTDEDDEAQ (71 aa). Over 1 to 93 the chain is Cytoplasmic; it reads MPRQRAPKEE…PISVDKKTRR (93 aa). A compositionally biased stretch (low complexity) spans 30-40; that stretch reads DTSISSISTTS. Residues 94-114 form a helical; Signal-anchor for type II membrane protein membrane-spanning segment; it reads WLWIVGIACVTGWALALVFFL. Over 115–880 the chain is Vacuolar; sequence MSGSYKHVST…AQVDARMERR (766 aa). A glycan (N-linked (GlcNAc...) asparagine) is linked at N533. The active-site Charge relay system is S724. N778 carries N-linked (GlcNAc...) asparagine glycosylation. Catalysis depends on charge relay system residues D801 and H834.

Belongs to the peptidase S9B family.

It is found in the vacuole membrane. It catalyses the reaction Release of an N-terminal dipeptide, Xaa-Yaa-|-Zaa-, from a polypeptide, preferentially when Yaa is Pro, provided Zaa is neither Pro nor hydroxyproline.. In terms of biological role, type IV dipeptidyl-peptidase which removes N-terminal dipeptides sequentially from polypeptides having unsubstituted N-termini provided that the penultimate residue is proline. The polypeptide is Probable dipeptidyl-aminopeptidase B (dapB) (Pyrenophora tritici-repentis (strain Pt-1C-BFP) (Wheat tan spot fungus)).